Here is a 165-residue protein sequence, read N- to C-terminus: Neurotrophin-3 (165 aa).

The N-terminal stretch at 1–3 (IQS) is a signal peptide. The propeptide occupies 4–119 (TSMDQGSLSE…VLNRTSRRKR (116 aa)). N112 carries N-linked (GlcNAc...) asparagine glycosylation.

It belongs to the NGF-beta family.

The protein resides in the secreted. Functionally, seems to promote the survival of visceral and proprioceptive sensory neurons. This chain is Neurotrophin-3 (NTF3), found in Anilius scytale (Coral cylinder snake).